The chain runs to 898 residues: Protein argonaute 1 (898 aa).

Residues 1-52 (MLALNAGSQYPGRGRGRGRGDGGNRVHKHDGINRYHGGFRGGRGGGGGGFRD) are disordered. Positions 18–33 (GRGDGGNRVHKHDGIN) are enriched in basic and acidic residues. Positions 38–50 (GFRGGRGGGGGGF) are enriched in gly residues. A PAZ domain is found at 283 to 378 (KCSDEMRRLR…IFADRTKMSR (96 aa)). The 342-residue stretch at 542–883 (FAMVKLRTKE…YARKYGSLKS (342 aa)) folds into the Piwi domain.

Belongs to the argonaute family.

It localises to the cytoplasm. Functionally, involved in RNA-mediated gene silencing (RNAi) of mobile elements and repeats including retroposons SLACS (Spliced Leader Associated Conserved Sequence), TATE (Telomere-Associated Transposable Element) and TAS-like sequences (Telomere Associated Sequence), and a family of 74-nucleotide long tandem repeats, CIR74. Predominantly binds to siRNAs derived from SLACS and TATE transposable elements and to a lesser extent to siRNAs from TAS-like and CIR74 elements. This is Protein argonaute 1 from Leishmania braziliensis.